Here is a 559-residue protein sequence, read N- to C-terminus: Neutral amino acid transporter 9 (559 aa).

Topologically, residues 1–118 (MANVDSDSRH…YTEGYRKNTS (118 aa)) are cytoplasmic. Residues 119–139 (LVTIFMIWNTMMGTSILSIPW) form a helical membrane-spanning segment. The interval 128–133 (TMMGTS) is important for arginine binding and amino acid transport. Ser-133 contributes to the arginine binding site. Over 140-145 (GIKQAG) the chain is Lumenal. A helical membrane pass occupies residues 146-166 (FTTGMCVIVLMGLLTLYCCYR). Over 167-197 (VVKSRSMIVTSDTTTWEYPDVCKHYFGSFGQ) the chain is Cytoplasmic. Residues 198 to 224 (WSSLLFSLVSLIGAMIVYWVLMSNFLF) form a helical membrane-spanning segment. Topologically, residues 225 to 281 (NTGKFIFNFIHHINDTDTVLSTNNSSPVICPSAGSGHPDNSSMIFYNSDTEVRLFER) are lumenal. Residues Asn-238, Asn-247, and Asn-264 are each glycosylated (N-linked (GlcNAc...) asparagine). Cys-254 and Cys-422 are oxidised to a cystine. The chain crosses the membrane as a helical span at residues 282–298 (WWDKSKTVPFYLIGLLL). The Cytoplasmic segment spans residues 299–307 (PLLNFKSPS). A helical membrane pass occupies residues 308–332 (FFSKFNILGTVSVLYLIFIVTLKAI). Residues 333 to 354 (RLGFHLEFHWFAPTEFFVPEIR) are Lumenal-facing. Residues 355 to 375 (AQFPQLTGVLTLAFFIHNCII) traverse the membrane as a helical segment. Residues 376–392 (TLLKNNKNQENNVRDLC) are Cytoplasmic-facing. A helical membrane pass occupies residues 393-413 (IAYMLVTLTYLYIGVLVFASF). Over 414–435 (PSPPLPKDCIEQNFLDNFPSSD) the chain is Lumenal. A helical transmembrane segment spans residues 436-456 (TLSFIARICLLFQMMTVYPLL). A CARC motif motif is present at residues 442-452 (RICLLFQMMTV). The CRAC motif motif lies at 455-461 (LLGYLAR). Topologically, residues 457 to 477 (GYLARVQLLGHIFGDIYPSIF) are cytoplasmic. A helical membrane pass occupies residues 478 to 498 (HVLILNLIIVGAGVTMACFYP). Residues 499-505 (NIGGIIR) are Lumenal-facing. The helical transmembrane segment at 506–526 (YSGAACGLAFVFIYPSLIYIL) threads the bilayer. The Cytoplasmic portion of the chain corresponds to 527–538 (SQHQEERLTWPK). Residues 539–559 (LVFHIIIIILGLANLIAQFFM) traverse the membrane as a helical segment.

This sequence belongs to the amino acid/polyamine transporter 2 family. SLC38A9 subfamily. Associated component of the Ragulator complex (composed of LAMTOR1, LAMTOR2, LAMTOR3, LAMTOR4 and LAMTOR5). Associated component of the Rag GTPases heterodimers (composed of RRAGA, RRAGB, RRAGC and RRAGD); this interaction is independent of the Ragulator complex but depends on the nucleotide loading state of the Rag GTPase heterodimer. Interacts with TM4SF5. Interacts with NPC1; this interaction inhibits cholesterol-mediated mTORC1 activation via its sterol transport activity. In terms of processing, glycosylated.

It is found in the lysosome membrane. It localises to the late endosome membrane. The enzyme catalyses L-leucine(in) = L-leucine(out). The catalysed reaction is L-tyrosine(in) = L-tyrosine(out). It catalyses the reaction L-glutamine(out) = L-glutamine(in). It carries out the reaction L-asparagine(out) = L-asparagine(in). Functionally, lysosomal amino acid transporter involved in the activation of mTORC1 in response to amino acid levels. Probably acts as an amino acid sensor of the Rag GTPases and Ragulator complexes, 2 complexes involved in amino acid sensing and activation of mTORC1, a signaling complex promoting cell growth in response to growth factors, energy levels, and amino acids. Following activation by amino acids, the Ragulator and Rag GTPases function as a scaffold recruiting mTORC1 to lysosomes where it is in turn activated. SLC38A9 mediates transport of amino acids with low capacity and specificity with a slight preference for polar amino acids. Acts as an arginine sensor. Following activation by arginine binding, mediates transport of L-glutamine, leucine and tyrosine with high efficiency, and is required for the efficient utilization of these amino acids after lysosomal protein degradation. However, the transport mechanism is not well defined and the role of sodium is not clear. Can disassemble the lysosomal folliculin complex (LFC), and thereby triggers GAP activity of FLCN:FNIP2 toward RRAGC. Acts as an cholesterol sensor that conveys increases in lysosomal cholesterol, leading to lysosomal recruitment and activation of mTORC1 via the Rag GTPases. Guanine exchange factor (GEF) that, upon arginine binding, stimulates GDP release from RRAGA and therefore activates the Rag GTPase heterodimer and the mTORC1 pathway in response to nutrient sufficiency. This is Neutral amino acid transporter 9 from Rattus norvegicus (Rat).